A 278-amino-acid polypeptide reads, in one-letter code: 4-deoxy-L-threo-5-hexosulose-uronate ketol-isomerase (278 aa).

4 residues coordinate Zn(2+): H196, H198, E203, and H245.

Belongs to the KduI family. Zn(2+) is required as a cofactor.

It catalyses the reaction 5-dehydro-4-deoxy-D-glucuronate = 3-deoxy-D-glycero-2,5-hexodiulosonate. It participates in glycan metabolism; pectin degradation; 2-dehydro-3-deoxy-D-gluconate from pectin: step 4/5. In terms of biological role, catalyzes the isomerization of 5-dehydro-4-deoxy-D-glucuronate to 3-deoxy-D-glycero-2,5-hexodiulosonate. The chain is 4-deoxy-L-threo-5-hexosulose-uronate ketol-isomerase from Paraburkholderia phytofirmans (strain DSM 17436 / LMG 22146 / PsJN) (Burkholderia phytofirmans).